We begin with the raw amino-acid sequence, 505 residues long: AAA-ATPase At5g17760 (505 aa).

The chain crosses the membrane as a helical span at residues 11–27 (TSVFTAYASMAGYMMMI). The tract at residues 136-155 (GGGGGVGGRGGGGGRRGGMD) is disordered. The span at 137-151 (GGGGVGGRGGGGGRR) shows a compositional bias: gly residues. 260–267 (GPPGTGKS) is an ATP binding site.

It belongs to the AAA ATPase family. BCS1 subfamily. It depends on Mg(2+) as a cofactor.

The protein localises to the membrane. It catalyses the reaction ATP + H2O = ADP + phosphate + H(+). The sequence is that of AAA-ATPase At5g17760 from Arabidopsis thaliana (Mouse-ear cress).